We begin with the raw amino-acid sequence, 403 residues long: Eukaryotic initiation factor 4A (403 aa).

A disordered region spans residues 1–20; the sequence is MDDRNEIPQDGPASMEPEGV. Positions 30–58 match the Q motif motif; the sequence is DNFDDMNLREELLRGIYGYGFEKPSAIQQ. Residues 61 to 231 form the Helicase ATP-binding domain; that stretch reads IIPCVRGRDV…RCFMRDPVSI (171 aa). 74–81 contributes to the ATP binding site; the sequence is AQSGTGKT. The DEAD box motif lies at 179–182; sequence DEAD. One can recognise a Helicase C-terminal domain in the interval 242–403; it reads GIKQFYVNVK…EMPANIADLI (162 aa).

Belongs to the DEAD box helicase family. eIF4A subfamily. In terms of assembly, eIF4F is a multi-subunit complex, the composition of which varies with external and internal environmental conditions. It is composed of at least eIF4A, eIF4E1 and eIF4G1. Interacts with tud and vas. Interacts (via multiple contacts) with bam; the interaction is direct.

The protein resides in the cytoplasm. It is found in the cytoplasmic ribonucleoprotein granule. It carries out the reaction ATP + H2O = ADP + phosphate + H(+). Functionally, ATP-dependent RNA helicase which is a subunit of the eIF4F complex involved in cap recognition and is required for mRNA binding to ribosome. In the current model of translation initiation, eIF4A unwinds RNA secondary structures in the 5'-UTR of mRNAs which is necessary to allow efficient binding of the small ribosomal subunit, and subsequent scanning for the initiator codon. As a result, promotes cell proliferation and growth. Binds and antagonises the bam-bgcn complex; probably prevents bam mediated translational repression of shg/E-cadherin. Involved in germ cell formation. Involved in germline stem cell maintenance and proliferation; prevents differentiation. The sequence is that of Eukaryotic initiation factor 4A from Drosophila melanogaster (Fruit fly).